We begin with the raw amino-acid sequence, 181 residues long: Regulator of G-protein signaling 5 (181 aa).

One can recognise an RGS domain in the interval 64-180; sequence SLDKLLQSNY…VRSEFYKELI (117 aa).

It is found in the cytoplasm. It localises to the membrane. Functionally, inhibits signal transduction by increasing the GTPase activity of G protein alpha subunits thereby driving them into their inactive GDP-bound form. Binds to G(i)-alpha and G(o)-alpha, but not to G(s)-alpha. The polypeptide is Regulator of G-protein signaling 5 (Rgs5) (Rattus norvegicus (Rat)).